The primary structure comprises 252 residues: Enolase-phosphatase E1 (252 aa).

2 residues coordinate Mg(2+): aspartate 18 and glutamate 20. Substrate is bound by residues 149–150 (SS) and lysine 184. Mg(2+) is bound at residue aspartate 209.

It belongs to the HAD-like hydrolase superfamily. MasA/MtnC family. In terms of assembly, monomer. Requires Mg(2+) as cofactor.

Its subcellular location is the cytoplasm. The protein localises to the nucleus. It catalyses the reaction 5-methylsulfanyl-2,3-dioxopentyl phosphate + H2O = 1,2-dihydroxy-5-(methylsulfanyl)pent-1-en-3-one + phosphate. It functions in the pathway amino-acid biosynthesis; L-methionine biosynthesis via salvage pathway; L-methionine from S-methyl-5-thio-alpha-D-ribose 1-phosphate: step 3/6. It participates in amino-acid biosynthesis; L-methionine biosynthesis via salvage pathway; L-methionine from S-methyl-5-thio-alpha-D-ribose 1-phosphate: step 4/6. Its function is as follows. Bifunctional enzyme that catalyzes the enolization of 2,3-diketo-5-methylthiopentyl-1-phosphate (DK-MTP-1-P) into the intermediate 2-hydroxy-3-keto-5-methylthiopentenyl-1-phosphate (HK-MTPenyl-1-P), which is then dephosphorylated to form the acireductone 1,2-dihydroxy-3-keto-5-methylthiopentene (DHK-MTPene). This Naegleria gruberi (Amoeba) protein is Enolase-phosphatase E1.